Consider the following 156-residue polypeptide: MISVLFVCLGNICRSPMAEAIFRDLAAKKGLEGKIKADSAGIGGWHIGNPPHEGTQEILRREGISFDGMLARQVSEQDLDDFDYIIAMDAENIGSLRSMAGFKNTSHIKRLLDYVEDSDLADVPDPYYTGNFEEVCQLIKTGCEQLLASIQKEKQL.

Residue cysteine 8 is the Nucleophile of the active site. Arginine 14 is a catalytic residue. Residue aspartate 125 is the Proton donor of the active site.

The protein belongs to the low molecular weight phosphotyrosine protein phosphatase family.

It carries out the reaction O-phospho-L-tyrosyl-[protein] + H2O = L-tyrosyl-[protein] + phosphate. With respect to regulation, efficiently inhibited by Cu(2+) ion, Zn(2+) ion and N-ethylmaleimide, while the addition of Mg(2+), Ca(2+) or Fe(3+) ions has minimal effect. Inhibited in a competitive manner by vanadate. Dephosphorylates the phosphotyrosine-containing proteins. Involved in ethanol stress resistance. The sequence is that of Low molecular weight protein-tyrosine-phosphatase YfkJ (yfkJ) from Bacillus subtilis (strain 168).